The chain runs to 196 residues: Putative NADH dehydrogenase/NAD(P)H nitroreductase Pnuc_0932 (196 aa).

It belongs to the nitroreductase family. HadB/RutE subfamily. FMN serves as cofactor.

In Polynucleobacter asymbioticus (strain DSM 18221 / CIP 109841 / QLW-P1DMWA-1) (Polynucleobacter necessarius subsp. asymbioticus), this protein is Putative NADH dehydrogenase/NAD(P)H nitroreductase Pnuc_0932.